Here is a 319-residue protein sequence, read N- to C-terminus: Aspartate carbamoyltransferase catalytic subunit (319 aa).

Arginine 57 and threonine 58 together coordinate carbamoyl phosphate. Position 85 (lysine 85) interacts with L-aspartate. Residues arginine 107, histidine 135, and glutamine 138 each coordinate carbamoyl phosphate. 2 residues coordinate L-aspartate: arginine 168 and arginine 222. Residues glycine 263 and proline 264 each coordinate carbamoyl phosphate.

This sequence belongs to the aspartate/ornithine carbamoyltransferase superfamily. ATCase family. Heterododecamer (2C3:3R2) of six catalytic PyrB chains organized as two trimers (C3), and six regulatory PyrI chains organized as three dimers (R2).

The catalysed reaction is carbamoyl phosphate + L-aspartate = N-carbamoyl-L-aspartate + phosphate + H(+). The protein operates within pyrimidine metabolism; UMP biosynthesis via de novo pathway; (S)-dihydroorotate from bicarbonate: step 2/3. In terms of biological role, catalyzes the condensation of carbamoyl phosphate and aspartate to form carbamoyl aspartate and inorganic phosphate, the committed step in the de novo pyrimidine nucleotide biosynthesis pathway. In Paracoccus denitrificans (strain Pd 1222), this protein is Aspartate carbamoyltransferase catalytic subunit.